The primary structure comprises 599 residues: THO complex subunit 1 (599 aa).

Disordered stretches follow at residues glutamate 376–arginine 395 and lysine 497–serine 599. Basic and acidic residues predominate over residues proline 502–glutamate 522. Residues glutamine 575–glycine 585 are compositionally biased toward acidic residues.

As to quaternary structure, component of the THO complex, which is composed of THO1, THO2, THO3, THO5, THO6 and THO7.

It is found in the nucleus. Acts as a component of the THO subcomplex of the TREX complex which is thought to couple mRNA transcription, processing and nuclear export. Contributes to the integrity of the endogenous trans-acting small interfering RNA (ta-siRNA) pathway. May process or transport a long RNA molecule so that it can be a template for secondary siRNA production. May participate in the trafficking of siRNA precursors to the ARGONAUTE catalytic center. Required for the generation of functional messenger ribonucleoproteins (mRNPs). Plays an important roles in plant innate immunity. The sequence is that of THO complex subunit 1 (THO1) from Arabidopsis thaliana (Mouse-ear cress).